The sequence spans 359 residues: tRNA N6-adenosine threonylcarbamoyltransferase (359 aa).

Residues His115 and His119 each coordinate Fe cation. Substrate is bound by residues 137–141 (LVSGG), Asp170, Gly183, and Asn283. Asp311 contacts Fe cation. The segment at 328 to 359 (APDSLDIAPRSRWPLDEKSAPVFGTGRRGAKA) is disordered.

The protein belongs to the KAE1 / TsaD family. Requires Fe(2+) as cofactor.

Its subcellular location is the cytoplasm. It carries out the reaction L-threonylcarbamoyladenylate + adenosine(37) in tRNA = N(6)-L-threonylcarbamoyladenosine(37) in tRNA + AMP + H(+). Functionally, required for the formation of a threonylcarbamoyl group on adenosine at position 37 (t(6)A37) in tRNAs that read codons beginning with adenine. Is involved in the transfer of the threonylcarbamoyl moiety of threonylcarbamoyl-AMP (TC-AMP) to the N6 group of A37, together with TsaE and TsaB. TsaD likely plays a direct catalytic role in this reaction. The polypeptide is tRNA N6-adenosine threonylcarbamoyltransferase (Brucella canis (strain ATCC 23365 / NCTC 10854 / RM-666)).